The chain runs to 425 residues: MPHTGQAGVNQLGGVFVNGRPLPDCVRRRIVDLALCGVRPCDISRQLLVSHGCVSKILTRFYETGSIRPGSIGGSKTKQVATPTVVKKIIRLKEENSGMFAWEIREQLQQQRVCDPSSVPSISSINRILRNSGLWTDEMTSSQQNAAAAAAAAAAAAHQAGSGPSNGYGGQAPPPPVTVAPPTPAATPSIARYAKPPALMMNSAGEMPIKPAPKMPPSMGHGHSHGLNPNVSGLDLSYSALHKHWLWNPSLLYYTQAHIQAQAAASGGQFLPYAGGYLPHAMAAAAASSTSALGGFTKSESSIDLSTPGAAGDALSDCDSGKSSPAALSLTASGGGNGAGSAPEASPGSTLSHSRKRNPYSIEELLKKPEKRLRLDSNRLECLESSSCESSQDSPVAPPLETPEDEDPAEAEEEQEEEDSVEVVN.

Residues 5–132 (GQAGVNQLGG…SSINRILRNS (128 aa)) constitute a DNA-binding region (paired). The interval 8 to 64 (GVNQLGGVFVNGRPLPDCVRRRIVDLALCGVRPCDISRQLLVSHGCVSKILTRFYET) is PAI subdomain. Positions 84-132 (TVVKKIIRLKEENSGMFAWEIREQLQQQRVCDPSSVPSISSINRILRNS) are RED subdomain. 3 disordered regions span residues 159-188 (QAGSGPSNGYGGQAPPPPVTVAPPTPAATP), 297-358 (TKSE…RKRN), and 383-425 (LESS…EVVN). Over residues 172-185 (APPPPVTVAPPTPA) the composition is skewed to pro residues. Composition is skewed to low complexity over residues 323-332 (SSPAALSLTA) and 340-349 (GSAPEASPGS). Residues 402–425 (TPEDEDPAEAEEEQEEEDSVEVVN) are compositionally biased toward acidic residues.

In terms of tissue distribution, central and peripheral nervous systems.

It is found in the nucleus. In terms of biological role, transcriptional regulator that specifies poly-innervated organs (chemosensory bristle). Also controls the number of neurons. This is Paired box pox-neuro protein (Poxn) from Drosophila melanogaster (Fruit fly).